The following is a 444-amino-acid chain: 4-O-dimethylallyl-L-tyrosine synthase (444 aa).

Belongs to the tryptophan dimethylallyltransferase family. In terms of assembly, homodimer.

The enzyme catalyses L-tyrosine + dimethylallyl diphosphate = 4-O-dimethylallyl-L-tyrosine + diphosphate. Functionally, 4-O-dimethylallyl-L-tyrosine synthase; part of the gene cluster that mediates the biosynthesis of an unusual class of epipolythiodioxopiperazines (ETPs) lacking the reactive thiol group important for toxicity. Firstly, L-tyrosine is prenylated by tcpD, before undergoing condensation with L-glycine in a reaction catalyzed by the NRPS tcpP leading to the diketopiperazine (DKP) backbone. Afterwards the alpha-carbon of tyrosine is oxidized by the cytochrome P450 tcpC to form a hydroxyl group. However, in contrast other ETP biosynthesis pathways studied so far, tcpC is not able to bishydroxylate the DKP at both alpha-carbon positions, but hydroxylates the alpha-carbon of the tyrosine part and the nitrogen of the glycine part. The next steps involve an alpha,beta-elimination reaction catalyzed by tcpI, a methylation by the methyltransferase tcpN the action of the four enzyme cascade tcpG/K/J/I. Due to a dysfunctional cytochrome P450 monooxygenase tcpC, the pathway leads to the biosynthesis of probable non-toxic metabolites lacking the reactive thiol group. The chain is 4-O-dimethylallyl-L-tyrosine synthase from Claviceps purpurea (strain 20.1) (Ergot fungus).